The chain runs to 360 residues: Magnesium-protoporphyrin IX monomethyl ester [oxidative] cyclase (360 aa).

The protein belongs to the AcsF family. Requires Fe cation as cofactor.

It catalyses the reaction Mg-protoporphyrin IX 13-monomethyl ester + 3 NADPH + 3 O2 + 2 H(+) = 3,8-divinyl protochlorophyllide a + 3 NADP(+) + 5 H2O. It functions in the pathway porphyrin-containing compound metabolism; chlorophyll biosynthesis (light-independent). Catalyzes the formation of the isocyclic ring in chlorophyll biosynthesis. Mediates the cyclase reaction, which results in the formation of divinylprotochlorophyllide (Pchlide) characteristic of all chlorophylls from magnesium-protoporphyrin IX 13-monomethyl ester (MgPMME). The polypeptide is Magnesium-protoporphyrin IX monomethyl ester [oxidative] cyclase (Synechococcus sp. (strain WH7803)).